Reading from the N-terminus, the 224-residue chain is Cytosolic-abundant heat soluble protein 77580 (224 aa).

Residues 1 to 13 show a composition bias toward low complexity; that stretch reads MSNYQQESSYQYS. The tract at residues 1-38 is disordered; the sequence is MSNYQQESSYQYSDRSNNGQQQEQQEKKEVEHSSYTHT. Over residues 24–38 the composition is skewed to basic and acidic residues; the sequence is QQEKKEVEHSSYTHT. Positions 83–191 form a coiled coil; sequence VIDTEAETEE…KRVLERSKFH (109 aa). 2 CAHS motif regions span residues 122–140 and 159–177; these read YRKQ…LEKQ and QKRQ…LERE. The segment covering 200–215 has biased composition (low complexity); that stretch reads AAAGSTHSGSSSVAVS. A disordered region spans residues 200–224; sequence AAAGSTHSGSSSVAVSESEKFQTNN.

It belongs to the Cytosolic-abundant heat soluble protein (CAHS) family.

The protein localises to the cytoplasm. In terms of biological role, CAHS proteins are cytosolic heat soluble proteins that seem to contribute to the anhydrobiosis in tardigrades, but their specific mechanisms are yet to be identified. It is possible that protection during anhydrobiosis might occur via the stabilization of vitrifying small molecules such as sugars, but not via the direct glass transition of CAHS proteins themselves. This Hypsibius exemplaris (Freshwater tardigrade) protein is Cytosolic-abundant heat soluble protein 77580.